The primary structure comprises 328 residues: Tetraacyldisaccharide 4'-kinase (328 aa).

55-62 is a binding site for ATP; it reads TAGGNGKT.

Belongs to the LpxK family.

It carries out the reaction a lipid A disaccharide + ATP = a lipid IVA + ADP + H(+). The protein operates within glycolipid biosynthesis; lipid IV(A) biosynthesis; lipid IV(A) from (3R)-3-hydroxytetradecanoyl-[acyl-carrier-protein] and UDP-N-acetyl-alpha-D-glucosamine: step 6/6. Its function is as follows. Transfers the gamma-phosphate of ATP to the 4'-position of a tetraacyldisaccharide 1-phosphate intermediate (termed DS-1-P) to form tetraacyldisaccharide 1,4'-bis-phosphate (lipid IVA). The protein is Tetraacyldisaccharide 4'-kinase of Escherichia coli O7:K1 (strain IAI39 / ExPEC).